The following is a 303-amino-acid chain: UPF0282 protein PAE3680 (303 aa).

This sequence belongs to the UPF0282 family.

The chain is UPF0282 protein PAE3680 from Pyrobaculum aerophilum (strain ATCC 51768 / DSM 7523 / JCM 9630 / CIP 104966 / NBRC 100827 / IM2).